We begin with the raw amino-acid sequence, 333 residues long: Anthranilate phosphoribosyltransferase (333 aa).

5-phospho-alpha-D-ribose 1-diphosphate-binding positions include glycine 81, glycine 84–asparagine 85, threonine 89, asparagine 91–threonine 94, lysine 109–serine 117, and alanine 121. An anthranilate-binding site is contributed by glycine 81. Serine 93 is a binding site for Mg(2+). Residue asparagine 112 participates in anthranilate binding. Arginine 167 contacts anthranilate. Mg(2+) contacts are provided by aspartate 225 and glutamate 226.

This sequence belongs to the anthranilate phosphoribosyltransferase family. Homodimer. Mg(2+) is required as a cofactor.

It catalyses the reaction N-(5-phospho-beta-D-ribosyl)anthranilate + diphosphate = 5-phospho-alpha-D-ribose 1-diphosphate + anthranilate. It participates in amino-acid biosynthesis; L-tryptophan biosynthesis; L-tryptophan from chorismate: step 2/5. In terms of biological role, catalyzes the transfer of the phosphoribosyl group of 5-phosphorylribose-1-pyrophosphate (PRPP) to anthranilate to yield N-(5'-phosphoribosyl)-anthranilate (PRA). In Haemophilus influenzae (strain ATCC 51907 / DSM 11121 / KW20 / Rd), this protein is Anthranilate phosphoribosyltransferase.